A 181-amino-acid chain; its full sequence is Large ribosomal subunit protein uL10 (181 aa).

The protein belongs to the universal ribosomal protein uL10 family. In terms of assembly, part of the ribosomal stalk of the 50S ribosomal subunit. The N-terminus interacts with L11 and the large rRNA to form the base of the stalk. The C-terminus forms an elongated spine to which L12 dimers bind in a sequential fashion forming a multimeric L10(L12)X complex.

Its function is as follows. Forms part of the ribosomal stalk, playing a central role in the interaction of the ribosome with GTP-bound translation factors. The polypeptide is Large ribosomal subunit protein uL10 (Chloroflexus aggregans (strain MD-66 / DSM 9485)).